The primary structure comprises 244 residues: 1-(5-phosphoribosyl)-5-[(5-phosphoribosylamino)methylideneamino] imidazole-4-carboxamide isomerase (244 aa).

Asp-8 (proton acceptor) is an active-site residue. The active-site Proton donor is the Asp-131.

The protein belongs to the HisA/HisF family.

Its subcellular location is the cytoplasm. It catalyses the reaction 1-(5-phospho-beta-D-ribosyl)-5-[(5-phospho-beta-D-ribosylamino)methylideneamino]imidazole-4-carboxamide = 5-[(5-phospho-1-deoxy-D-ribulos-1-ylimino)methylamino]-1-(5-phospho-beta-D-ribosyl)imidazole-4-carboxamide. The protein operates within amino-acid biosynthesis; L-histidine biosynthesis; L-histidine from 5-phospho-alpha-D-ribose 1-diphosphate: step 4/9. This Thermomicrobium roseum (strain ATCC 27502 / DSM 5159 / P-2) protein is 1-(5-phosphoribosyl)-5-[(5-phosphoribosylamino)methylideneamino] imidazole-4-carboxamide isomerase.